The sequence spans 1686 residues: Thrombospondin type-1 domain-containing protein 7A (1686 aa).

An N-terminal signal peptide occupies residues 1-36; that stretch reads MGLASRAPGKGGTSAGALASLFRVALLFFGLWDVQT. Residues 37–1635 are Extracellular-facing; it reads QTVANTRPTY…FGPDGKLKTW (1599 aa). 3 TSP type-1 domains span residues 44 to 103, 107 to 181, and 183 to 236; these read PTYI…RVCD, ELYD…IPCP, and DCVV…GKCE. Asn223 carries N-linked (GlcNAc...) asparagine glycosylation. Residues 257–321 form a disordered region; sequence IRQARDTGEA…EKKRMRDPET (65 aa). 2 stretches are compositionally biased toward basic and acidic residues: residues 259–272 and 294–321; these read QARDTGEARVPKAE and EKKELRESKGERVRERVKEKKRMRDPET. TSP type-1 domains lie at 385–441, 448–535, 537–596, 656–717, 718–797, 799–859, 860–932, 934–985, 988–1061, 1063–1123, 1124–1191, 1193–1247, 1248–1311, 1313–1368, 1369–1439, and 1441–1502; these read DCEV…SPQG, VVYN…IPCP, ECEV…PSCY, DCVL…HPCT, VYHW…LPCK, DCVV…SVCP, GYRW…LPCQ, DCQL…QYCP, KYNA…IPCP, DCKL…SDCS, QYVW…LPCP, DCVL…SNCF, HYSY…VECP, NCQL…KPCF, SWRY…VPCP, and ECYL…GQCY. Intrachain disulfides connect Cys460–Cys530, Cys480–Cys534, and Cys491–Cys519. A glycan (N-linked (GlcNAc...) asparagine) is linked at Asn475. Asn525 carries an N-linked (GlcNAc...) asparagine glycan. Intrachain disulfides connect Cys657/Cys699 and Cys668/Cys672. Asn701 carries an N-linked (GlcNAc...) asparagine glycan. Disulfide bonds link Cys711–Cys716, Cys729–Cys792, Cys756–Cys796, Cys767–Cys780, Cys800–Cys842, Cys811–Cys815, and Cys852–Cys858. Asn739 is a glycosylation site (N-linked (GlcNAc...) asparagine). Asn996 is a glycosylation site (N-linked (GlcNAc...) asparagine). Cystine bridges form between Cys1000-Cys1056, Cys1022-Cys1060, Cys1033-Cys1046, Cys1064-Cys1101, Cys1075-Cys1079, and Cys1118-Cys1122. N-linked (GlcNAc...) asparagine glycosylation occurs at Asn1071. Residue Asn1212 is glycosylated (N-linked (GlcNAc...) asparagine). Cys1240 and Cys1246 are oxidised to a cystine. Asn1252 carries N-linked (GlcNAc...) asparagine glycosylation. 12 disulfide bridges follow: Cys1259–Cys1306, Cys1267–Cys1310, Cys1278–Cys1291, Cys1314–Cys1352, Cys1325–Cys1329, Cys1362–Cys1367, Cys1378–Cys1434, Cys1385–Cys1438, Cys1396–Cys1415, Cys1442–Cys1486, Cys1453–Cys1457, and Cys1496–Cys1501. The N-linked (GlcNAc...) asparagine glycan is linked to Asn1303. N-linked (GlcNAc...) asparagine glycosylation occurs at Asn1393. A glycan (N-linked (GlcNAc...) asparagine) is linked at Asn1527. The helical transmembrane segment at 1636–1656 threads the bilayer; it reads VYGVAAGAFVLLVFIVSMTYL. Over 1657–1686 the chain is Cytoplasmic; it reads ACKKPKKPQRRQMNNRLKPLTLAYDGDADM.

In terms of processing, extensively N-glycosylated.

It localises to the cell membrane. The protein localises to the cell projection. Its function is as follows. Required for normal sprouting angiogenesis and normal embryonic development of intersegmental vessels (ISV). Required for normal function of the glomerular filtration barrier. Required for normal axon outgrowth on embryonic motor neurons at the level of the horizontal myoseptum. Required for normal expression of notch1b, suggesting that its functions in angiogenesis and neuron outgrowth are due to decreased expression of notch1b. Plays a role in actin cytoskeleton rearrangement. The chain is Thrombospondin type-1 domain-containing protein 7A from Danio rerio (Zebrafish).